The following is a 388-amino-acid chain: Succinate--CoA ligase [ADP-forming] subunit beta (388 aa).

The ATP-grasp domain maps to lysine 9–histidine 244. ATP-binding positions include lysine 46, glycine 53–glycine 55, glutamate 99, threonine 102, and glutamate 107. Asparagine 199 and aspartate 213 together coordinate Mg(2+). Residues asparagine 264 and glycine 321 to valine 323 contribute to the substrate site.

Belongs to the succinate/malate CoA ligase beta subunit family. As to quaternary structure, heterotetramer of two alpha and two beta subunits. The cofactor is Mg(2+).

The enzyme catalyses succinate + ATP + CoA = succinyl-CoA + ADP + phosphate. The catalysed reaction is GTP + succinate + CoA = succinyl-CoA + GDP + phosphate. The protein operates within carbohydrate metabolism; tricarboxylic acid cycle; succinate from succinyl-CoA (ligase route): step 1/1. In terms of biological role, succinyl-CoA synthetase functions in the citric acid cycle (TCA), coupling the hydrolysis of succinyl-CoA to the synthesis of either ATP or GTP and thus represents the only step of substrate-level phosphorylation in the TCA. The beta subunit provides nucleotide specificity of the enzyme and binds the substrate succinate, while the binding sites for coenzyme A and phosphate are found in the alpha subunit. This chain is Succinate--CoA ligase [ADP-forming] subunit beta, found in Sodalis glossinidius (strain morsitans).